Reading from the N-terminus, the 159-residue chain is Cytochrome c-type biogenesis protein CcmE (159 aa).

Over 1-8 (MHPIRKKR) the chain is Cytoplasmic. A helical; Signal-anchor for type II membrane protein transmembrane segment spans residues 9–29 (LTIVLFLVAGIAIAVGLTTYA). Topologically, residues 30-159 (LRQNINLFYD…VEKAAETTAY (130 aa)) are periplasmic. Residues H124 and Y128 each coordinate heme. The interval 135-159 (EALERSSKGQHKSADVEKAAETTAY) is disordered. A compositionally biased stretch (basic and acidic residues) spans 136–159 (ALERSSKGQHKSADVEKAAETTAY).

It belongs to the CcmE/CycJ family.

It is found in the cell inner membrane. Heme chaperone required for the biogenesis of c-type cytochromes. Transiently binds heme delivered by CcmC and transfers the heme to apo-cytochromes in a process facilitated by CcmF and CcmH. The chain is Cytochrome c-type biogenesis protein CcmE from Marinobacter nauticus (strain ATCC 700491 / DSM 11845 / VT8) (Marinobacter aquaeolei).